The sequence spans 288 residues: uncharacterized protein (288 aa).

This is an uncharacterized protein from Methanocaldococcus jannaschii (strain ATCC 43067 / DSM 2661 / JAL-1 / JCM 10045 / NBRC 100440) (Methanococcus jannaschii).